Consider the following 423-residue polypeptide: Protein disulfide isomerase-like 5-2 (423 aa).

A signal peptide spans 1–35 (MAATTTRPLPLLLLLLLPPLLLLLLSFHAAAAAAA). In terms of domain architecture, Thioredoxin spans 36–149 (EEFPRDGRVI…LVRNLNKFVA (114 aa)). Residues Cys71 and Cys74 each act as nucleophile in the active site. The cysteines at positions 71 and 74 are disulfide-linked. N-linked (GlcNAc...) asparagine glycosylation occurs at Asn181. The chain crosses the membrane as a helical span at residues 386–406 (LVSLNSLYILICVFALLGVMI).

It belongs to the protein disulfide isomerase family.

It is found in the membrane. Functionally, acts as a protein-folding catalyst that interacts with nascent polypeptides to catalyze the formation, isomerization, and reduction or oxidation of disulfide bonds. May play a role in storage protein biogenesis. This chain is Protein disulfide isomerase-like 5-2 (PDIL5-2), found in Oryza sativa subsp. japonica (Rice).